A 1643-amino-acid polypeptide reads, in one-letter code: MAQKPNFLKKIISAGLVTASTATIVAGFSGVAMGAAMQYNRTTNAAATTFDGIGFDQAAGANIPVAPNSVITANANNPITFNTPNGHLNSLFLDTANDLAVTINEDTTLGFITNIAQQAKFFNFTVAAGKILNITGQGITVQEASNTINAQNALTKVHGGAAINANDLSGLGSITFAAAPSVLEFNLINPTTQEAPLTLGANSKIVNGGNGTLNITNGFIQVSDNTFAGIKTINIDDCQGLMFNSTPDAANTLNLQVGGNTINFNGIDGTGKLVLVSKNGAATEFNVTGTLGGNLKGIIELNTAAVAGKLISQGGAANAVIGTDNGAGRAAGFIVSVDNGNAATISGQVYAKNMVIQSANAGGQVTFEHIVDVGLGGTTNFKTADSKVIITENSNFGSTNFGNLDTQIVVPDTKILKGNFIGDVKNNGNTAGVITFNANGALVSASTDPNIAVTNINAIEAEGAGVVELSGIHIAELRLGNGGSIFKLADGTVINGPVNQNALMNNNALAAGSIQLDGSAIITGDIGNGGVNAALQHITLANDASKILALDGANIIGANVGGAIHFQANGGTIKLTNTQNNIVVNFDLDITTDKTGVVDASSLTNNQTLTINGSIGTVVANTKTLAQLNIGSSKTILNAGDVAINELVIENNGSVQLNHNTYLITKTINAANQGQIIVAADPLNTNTTLADGTNLGSAENPLSTIHFATKAANADSILNVGKGVNLYANNITTNDANVGSLHFRSGGTSIVSGTVGGQQGHKLNNLILDNGTTVKFLGDTTFNGGTKIEGKSILQISNNYTTDHVESADNTGTLEFVNTDPITVTLNKQGAYFGVLKQVIISGPGNIVFNEIGNVGIVHGIAANSISFENASLGTSLFLPSGTPLDVLTIKSTVGNGTVDNFNAPIVVVSGIDSMINNGQIIGDKKNIIALSLGSDNSITVNANTLYSGIRTTKNNQGTVTLSGGMPNNPGTIYGLGLENGSPKLKQVTFTTDYNNLGSIIANNVTINDYVTLTTGGIAGTDFDAKITLGSVNGNANVRFVDSTFSDPRSMIVATQANKGTVTYLGNALVSNIGSLDTPVASVRFTGNDSGAGLQGNIYSQNIDFGTYNLTILNSNVILGGGTTAINGEIDLLTNNLIFANGTSTWGDNTSISTTLNVSSGNIGQVVIAEDAQVNATTTGTTTIKIQDNANANFSGTQAYTLIQGGARFNGTLGAPNFAVTGSNIFVKYELIRDSNQDYVLTRTNDVLNVVTTAVGNSAIANAPGVSQNISRCLESTNTAAYNNMLLAKDPSDVATFVGAIATDTSAAVTTVNLNDTQKTQDLLSNRLGTLRYLSNAETSDVAGSATGAVSSGDEAEVSYGVWAKPFYNIAEQDKKGGIAGYKAKTTGVVVGLDTLASDNLMIGAAIGITKTDIKHQDYKKGDKTDINGLSFSLYGSQQLVKNFFAQGNAIFTLNKVKSKSQRYFFESNGKMSKQIAAGNYDNMTFGGNLIFGYDYNAMPNVLVTPMAGLSYLKSSNENYKETGTTVANKRINSKFSDRVDLIVGAKVAGSTVNITDIVIYPEIHSFVVHKVNGKLSNSQSMLDGQTAPFISQPDRTAKTSYNIGLSANIKSDAKMEYGIGYDFNSASKYTAHQGTLKVRVNF.

The propeptide occupies G1329 to S1352. In terms of domain architecture, Autotransporter spans E1355–F1643.

This sequence belongs to the rickettsiae OmpA/OmpB family.

It localises to the periplasm. Its subcellular location is the secreted. It is found in the cell surface. The protein localises to the cell outer membrane. Functionally, the 120 kDa surface-exposed protein is a major structural protein which may play a role as a rickettsial virulence factor and/or immunogen during infection. Its function is as follows. The 32 kDa beta peptide may serve as a membrane anchor. It has been shown to adhere to biotinylated Vero cell proteins. The chain is Outer membrane protein B (ompB) from Rickettsia prowazekii (strain Madrid E).